Consider the following 307-residue polypeptide: Methionyl-tRNA formyltransferase (307 aa).

Residue 108-111 coordinates (6S)-5,6,7,8-tetrahydrofolate; the sequence is SLLP.

This sequence belongs to the Fmt family.

The enzyme catalyses L-methionyl-tRNA(fMet) + (6R)-10-formyltetrahydrofolate = N-formyl-L-methionyl-tRNA(fMet) + (6S)-5,6,7,8-tetrahydrofolate + H(+). Its function is as follows. Attaches a formyl group to the free amino group of methionyl-tRNA(fMet). The formyl group appears to play a dual role in the initiator identity of N-formylmethionyl-tRNA by promoting its recognition by IF2 and preventing the misappropriation of this tRNA by the elongation apparatus. This Xanthomonas oryzae pv. oryzae (strain MAFF 311018) protein is Methionyl-tRNA formyltransferase.